The sequence spans 351 residues: (S)-coclaurine N-methyltransferase (351 aa).

S-adenosyl-L-methionine is bound by residues Q91 to S92, V126 to G134, G130 to G132, and T153 to Q158. Residue C326 is part of the active site.

This sequence belongs to the CFA/CMAS family. In terms of tissue distribution, expressed in roots, stems, flower buds and at lower levels, in leaves. Restricted to sieve elements of the phloem adjacent or proximal to laticifers.

The protein resides in the cytoplasm. The enzyme catalyses (S)-coclaurine + S-adenosyl-L-methionine = (S)-N-methylcoclaurine + S-adenosyl-L-homocysteine + H(+). It functions in the pathway alkaloid biosynthesis; (S)-reticuline biosynthesis; (S)-reticuline from (S)-norcoclaurine: step 2/4. Its function is as follows. Involved in the biosynthesis of benzylisoquinoline alkaloids. N-methyltransferase methylating (S)-coclaurine. 4'-O-methylcoclaurine and norlaudanine can also be used as substrates. In Papaver somniferum (Opium poppy), this protein is (S)-coclaurine N-methyltransferase.